A 687-amino-acid chain; its full sequence is Elongation factor G (687 aa).

The tr-type G domain maps to 8–282; sequence NKFRNIGIMA…AVLAYLPSPL (275 aa). GTP is bound by residues 17–24, 81–85, and 135–138; these read AHIDAGKT, DTPGH, and NKMD.

Belongs to the TRAFAC class translation factor GTPase superfamily. Classic translation factor GTPase family. EF-G/EF-2 subfamily.

It is found in the cytoplasm. Its function is as follows. Catalyzes the GTP-dependent ribosomal translocation step during translation elongation. During this step, the ribosome changes from the pre-translocational (PRE) to the post-translocational (POST) state as the newly formed A-site-bound peptidyl-tRNA and P-site-bound deacylated tRNA move to the P and E sites, respectively. Catalyzes the coordinated movement of the two tRNA molecules, the mRNA and conformational changes in the ribosome. The sequence is that of Elongation factor G from Clostridium novyi (strain NT).